The primary structure comprises 640 residues: Uromodulin (640 aa).

Positions 1–24 are cleaved as a signal peptide; sequence MGQPSLTWMLMVVVASWFITTAAT. The EGF-like 1 domain occupies 28–64; that stretch reads EARWCSECHSNATCTEDEAVTTCTCQEGFTGDGLTCV. 21 cysteine pairs are disulfide-bonded: cysteine 32/cysteine 41, cysteine 35/cysteine 50, cysteine 52/cysteine 63, cysteine 69/cysteine 83, cysteine 77/cysteine 92, cysteine 94/cysteine 106, cysteine 112/cysteine 126, cysteine 120/cysteine 135, cysteine 137/cysteine 148, cysteine 150/cysteine 161, cysteine 155/cysteine 170, cysteine 174/cysteine 267, cysteine 195/cysteine 282, cysteine 217/cysteine 255, cysteine 223/cysteine 287, cysteine 248/cysteine 256, cysteine 297/cysteine 306, cysteine 300/cysteine 315, cysteine 317/cysteine 347, cysteine 335/cysteine 425, and cysteine 366/cysteine 389. Asparagine 38 carries N-linked (GlcNAc...) asparagine glycosylation. Residues 65–107 enclose the EGF-like 2; calcium-binding domain; the sequence is DLDECAIPGAHNCSANSSCVNTPGSFSCVCPEGFRLSPGLGCT. 2 N-linked (GlcNAc...) asparagine glycosylation sites follow: asparagine 76 and asparagine 80. In terms of domain architecture, EGF-like 3; calcium-binding spans 108-149; the sequence is DVDECAEPGLSHCHALATCVNVVGSYLCVCPAGYRGDGWHCE. The beta hairpin stretch occupies residues 150–171; sequence CSPGSCGPGLDCVPEGDALVCA. The D10C stretch occupies residues 172–291; it reads DPCQAHRTLD…CHLAYCTDPS (120 aa). N-linked (GlcNAc...) (complex) asparagine glycosylation occurs at asparagine 232. An N-linked (GlcNAc...) (high mannose) asparagine glycan is attached at asparagine 275. In terms of domain architecture, EGF-like 4 spans 292 to 323; the sequence is SVEGTCEECSIDEDCKSNNGRWHCQCKQDFNI. Residue asparagine 322 is glycosylated (N-linked (GlcNAc...) (complex) asparagine). Positions 334-429 are ZP-N; that stretch reads ECGANDMKVS…KINFACSYPL (96 aa). Residues 334 to 589 enclose the ZP domain; the sequence is ECGANDMKVS…PTCSGTRFRS (256 aa). Residue asparagine 396 is glycosylated (N-linked (GlcNAc...) (complex) asparagine). Residues 430 to 453 form a flexible ZP-N/ZP-C linker; important for secretion and polymerization into filaments region; that stretch reads DMKVSLKTALQPMVSALNIRVGGT. The tract at residues 454 to 465 is internal hydrophobic patch (IHP); the sequence is GMFTVRMALFQT. The tract at residues 454–589 is ZP-C; it reads GMFTVRMALF…PTCSGTRFRS (136 aa). 3 disulfides stabilise this stretch: cysteine 506-cysteine 566, cysteine 527-cysteine 582, and cysteine 571-cysteine 578. N-linked (GlcNAc...) (complex) asparagine; alternate glycosylation is present at asparagine 513. An N-linked (GlcNAc...) (high mannose) asparagine; alternate glycan is attached at asparagine 513. Residues 586–589 form an essential for cleavage by HPN region; sequence RFRS. The interval 598–606 is external hydrophobic patch (EHP); regulates polymerization into filaments; that stretch reads VLNLGPITR. The GPI-anchor amidated serine moiety is linked to residue serine 614. The propeptide at 615 to 640 is removed in mature form; the sequence is RAFSSLGLLKVWLPLLLSATLTLTFQ.

Homodimer that then polymerizes into long filaments. The filaments can additionally assemble laterally to form a sheet. The filaments consist of a zigzag-shaped backbone with laterally protruding arms which interact with bacterial adhesin fimH. Two fimH molecules can bind to a single UMOD monomer. Post-translationally, N-glycosylated. N-glycan heterogeneity at Asn-232: Hex7HexNAc6 (major) and dHex1Hex7HexNAc6 (minor); at Asn-322: dHex1Hex6HexNAc5 (minor), dHex1Hex7HexNAc6 (major) and dHex1Hex8HexNAc7 (minor); at Asn-396: Hex6HexNAc5 (major), dHex1Hex6HexNAc5 (minor) and Hex7HexNAc6 (minor). Glycosylated Asn-232 interacts with E.coli adhesin fimH. Other complex glycosylation sites may serve as binding sites for proteins from other bacteria inclduding K.pneumoniae, P.aeruginosa and S.mitis. Proteolytically cleaved at a conserved C-terminal proteolytic cleavage site to generate the secreted form found in urine. This cleavage is catalyzed by HPN. Expressed in the tubular cells of the kidney. Most abundant protein in normal urine (at protein level). Synthesized exclusively in the kidney. Expressed exclusively by epithelial cells of the thick ascending limb of Henle's loop (TALH) and of distal convoluted tubule lumen.

The protein resides in the apical cell membrane. The protein localises to the basolateral cell membrane. Its subcellular location is the cell projection. It is found in the cilium membrane. It localises to the secreted. Functions in biogenesis and organization of the apical membrane of epithelial cells of the thick ascending limb of Henle's loop (TALH), where it promotes formation of complex filamentous gel-like structure that may play a role in the water barrier permeability. May serve as a receptor for binding and endocytosis of cytokines (IL-1, IL-2) and TNF. Facilitates neutrophil migration across renal epithelia. In terms of biological role, in the urine, may contribute to colloid osmotic pressure, retards passage of positively charged electrolytes, and inhibits formation of liquid containing supersaturated salts and subsequent formation of salt crystals. Protects against urinary tract infections by binding to type 1 fimbriated E.coli. Binds to bacterial adhesin fimH which mediates the stable formation of bacterial aggregates, prevents the binding of E.coli to uroplakins UPK1A and UPK1B which act as urothelial receptors for type I fimbriae, and allows for pathogen clearance through micturation. Also promotes aggregation of other bacteria including K.pneumoniae, P.aeruginosa and S.mitis and so may also protect against other uropathogens. This is Uromodulin (UMOD) from Homo sapiens (Human).